Reading from the N-terminus, the 250-residue chain is Myelin basic protein (250 aa).

Positions 1-28 (MGNHSGKRELSAEKASKDGEIHRGEAGK) are enriched in basic and acidic residues. The segment at 1-150 (MGNHSGKREL…SQRSKYLATA (150 aa)) is disordered. N-acetylalanine is present on G2. A phosphoserine mark is found at S31 and S40. The span at 95–113 (FSRDAPGREDNTFKDRPSE) shows a compositional bias: basic and acidic residues. The residue at position 96 (S96) is a Phosphothreonine. E113 carries the phosphoserine modification. At E122 the chain carries Phosphothreonine. The residue at position 125 (T125) is a Phosphotyrosine. Phosphoserine occurs at positions 135, 139, 141, and 144. 2 positions are modified to phosphotyrosine: Y146 and L147. Phosphothreonine is present on T149. Position 151 is a phosphoserine (S151). A Phosphotyrosine modification is found at S151. A Phosphothreonine modification is found at T152. 2 positions are modified to citrulline: R157 and R163. Residue T167 is modified to Phosphothreonine. The residue at position 172 (S172) is a Phosphoserine. An omega-N-methylarginine mark is found at R175 and R181. A disordered region spans residues 175–250 (RFFSGDRGAP…SRSGSPMARR (76 aa)). Position 188 is a phosphoserine (S188). A Phosphothreonine modification is found at T197. Residues 197-206 (THYGSLPQKS) show a composition bias toward polar residues. Y199 bears the Phosphotyrosine mark. Position 206 is a phosphoserine (S206). A phosphothreonine mark is found at T211, T226, and T229. A Deamidated glutamine modification is found at Q234. R239 is subject to Citrulline. S241 carries the post-translational modification Phosphoserine. Phosphoserine; by UHMK1 is present on S245. The residue at position 250 (R250) is a Citrulline.

Belongs to the myelin basic protein family. Homodimer. Post-translationally, as in other animals, several charge isomers may be produced as a result of optional post-translational modifications, such as phosphorylation of serine or threonine residues, deamidation of glutamine or asparagine residues, citrullination and methylation of arginine residues. In terms of processing, methylated on arginine residues; decreases with the age of the animal, making MBP more cationic. Phosphorylated by TAOK2, VRK2, MAPK11, MAPK12, MAPK14 and MINK1. Post-translationally, proteolytically cleaved in B cell lysosomes by cathepsin CTSG which degrades the major immunogenic MBP epitope and prevents the activation of MBP-specific autoreactive T cells. In the embryo, isoform 1-isoform 3 are found in neurons within the central nervous system (primarily in pioneer neurons important in the formation of the cortex) and the peripheral nervous system. They are also expressed in the thymus, gut, lung and kidney. In the adult, isoform 1-isoform 3 are highly expressed in the brain (mainly in brain regions rich in oligodendrocytes) and spleen. Lower levels are seen in the heart, kidney and lung. Isoform 2 is also found in cells of the immune system. The isoforms missing the 134 first amino acids (isoform 4-isoform 13) are almost exclusively produced in the myelin-forming cells, the mature oligodendrocytes.

The protein localises to the myelin membrane. The protein resides in the cytoplasm. Its subcellular location is the nucleus. Its function is as follows. The classic group of MBP isoforms (isoform 4-isoform 13) are with PLP the most abundant protein components of the myelin membrane in the CNS. They have a role in both its formation and stabilization. The non-classic group of MBP isoforms (isoform 1-isoform 3/Golli-MBPs) may preferentially have a role in the early developing brain long before myelination, maybe as components of transcriptional complexes, and may also be involved in signaling pathways in T-cells and neural cells. Differential splicing events combined to optional post-translational modifications give a wide spectrum of isomers, with each of them potentially having a specialized function. The chain is Myelin basic protein (Mbp) from Mus musculus (Mouse).